The following is a 146-amino-acid chain: D-aminoacyl-tRNA deacylase (146 aa).

A Gly-cisPro motif, important for rejection of L-amino acids motif is present at residues glycine 138 to proline 139.

This sequence belongs to the DTD family. As to quaternary structure, homodimer.

It is found in the cytoplasm. The catalysed reaction is glycyl-tRNA(Ala) + H2O = tRNA(Ala) + glycine + H(+). It catalyses the reaction a D-aminoacyl-tRNA + H2O = a tRNA + a D-alpha-amino acid + H(+). An aminoacyl-tRNA editing enzyme that deacylates mischarged D-aminoacyl-tRNAs. Also deacylates mischarged glycyl-tRNA(Ala), protecting cells against glycine mischarging by AlaRS. Acts via tRNA-based rather than protein-based catalysis; rejects L-amino acids rather than detecting D-amino acids in the active site. By recycling D-aminoacyl-tRNA to D-amino acids and free tRNA molecules, this enzyme counteracts the toxicity associated with the formation of D-aminoacyl-tRNA entities in vivo and helps enforce protein L-homochirality. The polypeptide is D-aminoacyl-tRNA deacylase (Xanthomonas oryzae pv. oryzae (strain MAFF 311018)).